The primary structure comprises 191 residues: Chromobox protein homolog 5 (191 aa).

Residues 1–21 (MGKKTKRTADSSSSEDEEEYV) form a disordered region. 4 positions are modified to phosphoserine: S11, S12, S13, and S14. The Chromo 1 domain occupies 20-78 (YVVEKVLDRRMVKGQVEYLLKWKGFSEEHNTWEPEKNLDCPELISEFMKKYKKMKEGEN). A Glycyl lysine isopeptide (Lys-Gly) (interchain with G-Cter in SUMO2) cross-link involves residue K32. The residue at position 40 (K40) is an N6-acetyllysine. The interval 70–117 (YKKMKEGENNKPREKSEGNKRKSSFSNSADDIKSKKKREQSNDIARGF) is disordered. Positions 73–89 (MKEGENNKPREKSEGNK) are enriched in basic and acidic residues. Residue K91 forms a Glycyl lysine isopeptide (Lys-Gly) (interchain with G-Cter in SUMO2) linkage. S92, S93, S95, and S97 each carry phosphoserine. Residues K102, K106, K154, and K184 each participate in a glycyl lysine isopeptide (Lys-Gly) (interchain with G-Cter in SUMO2) cross-link. The Chromo 2; shadow subtype domain occupies 121–179 (LEPEKIIGATDSCGDLMFLMKWKDTDEADLVLAKEANVKCPQIVIAFYEERLTWHAYPE).

Homodimer. Interacts with histone H3 methylated at 'Lys-9'. Interacts (via Chromo 2; shadow subtype domain) with the MIS12 complex subunit NSL1; the interaction is direct, involves dimeric CBX5, and occurs during interphase. Interacts with POGZ; POGZ and PXVXL motif-containing proteins such as INCENP and TRIM28 compete for interaction with CBX5. Interacts with LRIF1 (via PxVxL motif). Interacts with INCENP. Interacts with TRIM24. Interacts (via the chromoshadow domain) with ATRX; the interaction is direct. Interacts (via the chromoshadow domain) with CHAF1A; the interaction is direct. Interacts (via the chromoshadow domain) with LBR; the interaction is direct. Interacts (via the chromoshadow domain) with NIPBL; the interaction is direct. Interacts (via the chromoshadow domain) with SP100; the interaction is direct. Interacts (via the chromoshadow domain) with STAM2; the interaction is direct. Interacts (via the chromoshadow domain) with TRIM28; the interaction is direct. Interacts (via the chromoshadow domain) with CBX3; the interaction is direct. Interacts with PRR14 (via N-terminus). Interacts with RRP1B. Interacts with HNRNPU (via C-terminus); this interaction is, at least in part, RNA-dependent. Interacts with ZNF263; recruited to the SIX3 promoter along with other proteins involved in chromatin modification and transcriptional corepression where it contributes to transcriptional repression. Interacts with AURKB during mitosis. Interacts with CHAMP1. Interacts with BAHD1. Interacts with HP1BP3. Interacts with CHD3. Interacts with CHD4. Interacts with SMYD5. Interacts with KMT5B. Interacts with KMT5C. In terms of processing, phosphorylation of HP1 and LBR may be responsible for some of the alterations in chromatin organization and nuclear structure which occur at various times during the cell cycle. Phosphorylated during interphase and possibly hyper-phosphorylated during mitosis. Post-translationally, ubiquitinated.

The protein localises to the nucleus. The protein resides in the chromosome. Its subcellular location is the centromere. Component of heterochromatin that recognizes and binds histone H3 tails methylated at 'Lys-9' (H3K9me), leading to epigenetic repression. In contrast, it is excluded from chromatin when 'Tyr-41' of histone H3 is phosphorylated (H3Y41ph). May contribute to the association of heterochromatin with the inner nuclear membrane by interactions with the lamin-B receptor (LBR). Involved in the formation of kinetochore through interaction with the MIS12 complex subunit NSL1. Required for the formation of the inner centromere. Its function is as follows. Component of heterochromatin that recognizes and binds histone H3 tails methylated at 'Lys-9' (H3K9me), leading to epigenetic repression. In contrast, it is excluded from chromatin when 'Tyr-41' of histone H3 is phosphorylated (H3Y41ph). Can interact with lamin-B receptor (LBR). This interaction can contribute to the association of the heterochromatin with the inner nuclear membrane. Involved in the formation of functional kinetochore through interaction with MIS12 complex proteins. In Mus musculus (Mouse), this protein is Chromobox protein homolog 5 (Cbx5).